A 367-amino-acid chain; its full sequence is Glutamate 5-kinase (367 aa).

Position 10 (K10) interacts with ATP. Positions 50, 137, and 149 each coordinate substrate. ATP contacts are provided by residues 169–170 and 211–217; these read TD and TGGMGTK. The PUA domain maps to 275 to 353; the sequence is AGEITVDEGA…QQIDAILGYE (79 aa).

It belongs to the glutamate 5-kinase family.

It is found in the cytoplasm. It carries out the reaction L-glutamate + ATP = L-glutamyl 5-phosphate + ADP. The protein operates within amino-acid biosynthesis; L-proline biosynthesis; L-glutamate 5-semialdehyde from L-glutamate: step 1/2. Catalyzes the transfer of a phosphate group to glutamate to form L-glutamate 5-phosphate. The protein is Glutamate 5-kinase of Cronobacter sakazakii (strain ATCC BAA-894) (Enterobacter sakazakii).